An 85-amino-acid polypeptide reads, in one-letter code: Small ribosomal subunit protein uS17 (85 aa).

The protein belongs to the universal ribosomal protein uS17 family. Part of the 30S ribosomal subunit.

In terms of biological role, one of the primary rRNA binding proteins, it binds specifically to the 5'-end of 16S ribosomal RNA. The sequence is that of Small ribosomal subunit protein uS17 from Spiroplasma citri.